The following is a 253-amino-acid chain: Imidazole glycerol phosphate synthase subunit HisF (253 aa).

Active-site residues include Asp11 and Asp130.

It belongs to the HisA/HisF family. In terms of assembly, heterodimer of HisH and HisF.

Its subcellular location is the cytoplasm. The catalysed reaction is 5-[(5-phospho-1-deoxy-D-ribulos-1-ylimino)methylamino]-1-(5-phospho-beta-D-ribosyl)imidazole-4-carboxamide + L-glutamine = D-erythro-1-(imidazol-4-yl)glycerol 3-phosphate + 5-amino-1-(5-phospho-beta-D-ribosyl)imidazole-4-carboxamide + L-glutamate + H(+). It participates in amino-acid biosynthesis; L-histidine biosynthesis; L-histidine from 5-phospho-alpha-D-ribose 1-diphosphate: step 5/9. Its function is as follows. IGPS catalyzes the conversion of PRFAR and glutamine to IGP, AICAR and glutamate. The HisF subunit catalyzes the cyclization activity that produces IGP and AICAR from PRFAR using the ammonia provided by the HisH subunit. The sequence is that of Imidazole glycerol phosphate synthase subunit HisF from Cereibacter sphaeroides (strain KD131 / KCTC 12085) (Rhodobacter sphaeroides).